The following is a 253-amino-acid chain: Probable transcriptional regulatory protein RAF_ORF0717 (253 aa).

The segment at 1–21 (MAGHSKFKNIQHRKGAQDKKR) is disordered.

It belongs to the TACO1 family.

It is found in the cytoplasm. The chain is Probable transcriptional regulatory protein RAF_ORF0717 from Rickettsia africae (strain ESF-5).